The primary structure comprises 328 residues: DNA-directed RNA polymerase subunit alpha (328 aa).

The segment at 1–230 (MNKIKITPSV…QSQMEIFTND (230 aa)) is alpha N-terminal domain (alpha-NTD). Positions 243-328 (NSEIFYQPLD…ILKKIEQNKS (86 aa)) are alpha C-terminal domain (alpha-CTD).

It belongs to the RNA polymerase alpha chain family. Homodimer. The RNAP catalytic core consists of 2 alpha, 1 beta, 1 beta' and 1 omega subunit. When a sigma factor is associated with the core the holoenzyme is formed, which can initiate transcription.

The enzyme catalyses RNA(n) + a ribonucleoside 5'-triphosphate = RNA(n+1) + diphosphate. Its function is as follows. DNA-dependent RNA polymerase catalyzes the transcription of DNA into RNA using the four ribonucleoside triphosphates as substrates. The polypeptide is DNA-directed RNA polymerase subunit alpha (Nitratiruptor sp. (strain SB155-2)).